Here is a 251-residue protein sequence, read N- to C-terminus: MKIDILTLFPEMFAGPFSSSILKRAQERGLVEIGLINIRDFSTNKHHTVDDAPYGGGAGMVMGPEALFGAVEHVARKYGSKPGRVVLMCPQGIPFTQAYAADLAREETIVLVCGHYEGIDERVREALVTDEISIGDYVLTGGELPAMVVVDAVARLVPGVLGEALSVMEESFSNGLLEYPHFTRPREFRGLKVPEVLLSGHHEEIRKWRRRQSLLRTLERRPEMLKQAGLTREDREILKELLASLNELDLS.

S-adenosyl-L-methionine is bound by residues Gly-114 and 134–139; that span reads IGDYVL.

This sequence belongs to the RNA methyltransferase TrmD family. As to quaternary structure, homodimer.

The protein resides in the cytoplasm. The catalysed reaction is guanosine(37) in tRNA + S-adenosyl-L-methionine = N(1)-methylguanosine(37) in tRNA + S-adenosyl-L-homocysteine + H(+). Functionally, specifically methylates guanosine-37 in various tRNAs. The protein is tRNA (guanine-N(1)-)-methyltransferase of Pelotomaculum thermopropionicum (strain DSM 13744 / JCM 10971 / SI).